A 224-amino-acid chain; its full sequence is MTAPKAVVLVSGGLDSATVLAIAREQEFICHTLSFNYGQRHRVELQAAAEISRRMGAVEHKRITIDLGGFGGSALTDPSMAVPEASSGAIPITYVPARNTVFLSFALGWAEVLGAQDIFIGVNAVDYSGYPDCRPAFIKAFEHLAKLATCAGLEGRAFRIQAPLLHLSKAEIIREGMRLGIDYSRTISCYQADENGRACGVCDSCRFRKQGFWDAGVPDPTRYH.

ATP is bound at residue valine 10–leucine 20. Zn(2+) contacts are provided by cysteine 189, cysteine 199, cysteine 202, and cysteine 205.

It belongs to the QueC family. Zn(2+) is required as a cofactor.

The catalysed reaction is 7-carboxy-7-deazaguanine + NH4(+) + ATP = 7-cyano-7-deazaguanine + ADP + phosphate + H2O + H(+). It participates in purine metabolism; 7-cyano-7-deazaguanine biosynthesis. Catalyzes the ATP-dependent conversion of 7-carboxy-7-deazaguanine (CDG) to 7-cyano-7-deazaguanine (preQ(0)). The protein is 7-cyano-7-deazaguanine synthase of Nitrosococcus oceani (strain ATCC 19707 / BCRC 17464 / JCM 30415 / NCIMB 11848 / C-107).